We begin with the raw amino-acid sequence, 119 residues long: Small ribosomal subunit protein uS13 (119 aa).

Residues 94–119 (GLPVRGQRTQTNARTRKGPRRGPAGK) are disordered.

It belongs to the universal ribosomal protein uS13 family. In terms of assembly, part of the 30S ribosomal subunit. Forms a loose heterodimer with protein S19. Forms two bridges to the 50S subunit in the 70S ribosome.

Functionally, located at the top of the head of the 30S subunit, it contacts several helices of the 16S rRNA. In the 70S ribosome it contacts the 23S rRNA (bridge B1a) and protein L5 of the 50S subunit (bridge B1b), connecting the 2 subunits; these bridges are implicated in subunit movement. Contacts the tRNAs in the A and P-sites. This chain is Small ribosomal subunit protein uS13, found in Alkalilimnicola ehrlichii (strain ATCC BAA-1101 / DSM 17681 / MLHE-1).